The chain runs to 95 residues: Protein TusB (95 aa).

This sequence belongs to the DsrH/TusB family. Heterohexamer, formed by a dimer of trimers. The hexameric TusBCD complex contains 2 copies each of TusB, TusC and TusD. The TusBCD complex interacts with TusE.

The protein localises to the cytoplasm. Functionally, part of a sulfur-relay system required for 2-thiolation of 5-methylaminomethyl-2-thiouridine (mnm(5)s(2)U) at tRNA wobble positions. The sequence is that of Protein TusB from Enterobacter sp. (strain 638).